The primary structure comprises 172 residues: Photosystem I assembly protein Ycf3 (172 aa).

TPR repeat units lie at residues 35-70, 74-107, and 122-155; these read AFTY…EIDP, SYIL…NPFL, and GEQA…TPGN.

Belongs to the Ycf3 family.

It is found in the plastid. The protein localises to the chloroplast thylakoid membrane. Essential for the assembly of the photosystem I (PSI) complex. May act as a chaperone-like factor to guide the assembly of the PSI subunits. The polypeptide is Photosystem I assembly protein Ycf3 (Sorghum bicolor (Sorghum)).